The primary structure comprises 90 residues: Small ribosomal subunit protein bS20 (90 aa).

The segment at 1 to 27 is disordered; that stretch reads MANSAQAKKRARQNEKRELHNASQRSA.

Belongs to the bacterial ribosomal protein bS20 family.

Functionally, binds directly to 16S ribosomal RNA. This Coxiella burnetii (strain CbuK_Q154) (Coxiella burnetii (strain Q154)) protein is Small ribosomal subunit protein bS20.